The following is an 85-amino-acid chain: Large ribosomal subunit protein bL27 (85 aa).

The disordered stretch occupies residues 1–22 (MAHKKAGGSTKNGRDSESKRLG).

It belongs to the bacterial ribosomal protein bL27 family.

The polypeptide is Large ribosomal subunit protein bL27 (Idiomarina loihiensis (strain ATCC BAA-735 / DSM 15497 / L2-TR)).